Reading from the N-terminus, the 419-residue chain is D-inositol 3-phosphate glycosyltransferase (419 aa).

Histidine 9 serves as a coordination point for 1D-myo-inositol 3-phosphate. UDP-N-acetyl-alpha-D-glucosamine contacts are provided by residues 15–16 (QP) and glycine 23. 1D-myo-inositol 3-phosphate contacts are provided by residues 20-25 (DAGGMN), lysine 78, tyrosine 110, threonine 134, and arginine 154. 3 residues coordinate UDP-N-acetyl-alpha-D-glucosamine: arginine 231, lysine 236, and arginine 295. Residues tyrosine 304, arginine 305, and alanine 307 each coordinate Mg(2+). Residues glutamate 317 and glutamate 325 each coordinate UDP-N-acetyl-alpha-D-glucosamine. Threonine 331 serves as a coordination point for Mg(2+).

It belongs to the glycosyltransferase group 1 family. MshA subfamily. In terms of assembly, homodimer.

It catalyses the reaction 1D-myo-inositol 3-phosphate + UDP-N-acetyl-alpha-D-glucosamine = 1D-myo-inositol 2-acetamido-2-deoxy-alpha-D-glucopyranoside 3-phosphate + UDP + H(+). Functionally, catalyzes the transfer of a N-acetyl-glucosamine moiety to 1D-myo-inositol 3-phosphate to produce 1D-myo-inositol 2-acetamido-2-deoxy-glucopyranoside 3-phosphate in the mycothiol biosynthesis pathway. The polypeptide is D-inositol 3-phosphate glycosyltransferase (Corynebacterium jeikeium (strain K411)).